Consider the following 292-residue polypeptide: tRNA dimethylallyltransferase (292 aa).

Residue 5 to 12 participates in ATP binding; it reads APTGAGKT. 7-12 contacts substrate; sequence TGAGKT. The tract at residues 29–32 is interaction with substrate tRNA; it reads DSRQ.

Belongs to the IPP transferase family. As to quaternary structure, monomer. Mg(2+) serves as cofactor.

It carries out the reaction adenosine(37) in tRNA + dimethylallyl diphosphate = N(6)-dimethylallyladenosine(37) in tRNA + diphosphate. Functionally, catalyzes the transfer of a dimethylallyl group onto the adenine at position 37 in tRNAs that read codons beginning with uridine, leading to the formation of N6-(dimethylallyl)adenosine (i(6)A). This is tRNA dimethylallyltransferase from Leptospira borgpetersenii serovar Hardjo-bovis (strain JB197).